The chain runs to 209 residues: Ribonuclease HII (209 aa).

The RNase H type-2 domain occupies 7-198; that stretch reads GPVAGVDEAG…VAKAHQEWLH (192 aa). Residues aspartate 13, glutamate 14, and aspartate 107 each coordinate a divalent metal cation.

Belongs to the RNase HII family. Mn(2+) serves as cofactor. Mg(2+) is required as a cofactor.

It is found in the cytoplasm. It carries out the reaction Endonucleolytic cleavage to 5'-phosphomonoester.. In terms of biological role, endonuclease that specifically degrades the RNA of RNA-DNA hybrids. In Corynebacterium glutamicum (strain R), this protein is Ribonuclease HII.